The sequence spans 697 residues: Lebercilin (697 aa).

Residues 1–90 (MGERAGSPGT…VGFRSQSLNR (90 aa)) are disordered. 2 positions are modified to phosphoserine: serine 7 and serine 45. Over residues 32–45 (SSGRSSLVSSSPAS) the composition is skewed to low complexity. Coiled-coil stretches lie at residues 103-297 (RILS…IKNI) and 389-485 (EEKF…RNLK). 3 disordered regions span residues 412–432 (WEREELDKKQKEKASLLEREE), 522–548 (HHLQDISFSTPKGEGQNSGNVRSPASP), and 606–697 (EQLF…VALR). The span at 416 to 432 (ELDKKQKEKASLLEREE) shows a compositional bias: basic and acidic residues. Over residues 527-547 (ISFSTPKGEGQNSGNVRSPAS) the composition is skewed to polar residues. Over residues 612 to 626 (SGSSTISSKSSDPNS) the composition is skewed to low complexity. Acidic residues predominate over residues 686–697 (SVEDEIEEVALR).

It belongs to the LCA5 family. Interacts with NINL. Interacts with OFD1. Interacts with FAM161A. Interacts with components of the IFT complex B. Widely expressed.

It localises to the cytoplasm. The protein localises to the cytoskeleton. It is found in the cilium axoneme. Its subcellular location is the cilium basal body. The protein resides in the microtubule organizing center. It localises to the centrosome. The protein localises to the cell projection. It is found in the cilium. Functionally, involved in intraflagellar protein (IFT) transport in photoreceptor cilia. This chain is Lebercilin (LCA5), found in Homo sapiens (Human).